Reading from the N-terminus, the 776-residue chain is Protein translocase subunit SecA 2 (776 aa).

ATP is bound by residues Gln80, 98 to 102, and Asp486; that span reads GEGKT.

It belongs to the SecA family. Monomer and homodimer. Part of the essential Sec protein translocation apparatus which comprises SecA, SecYEG and auxiliary proteins SecDF. Other proteins may also be involved.

It localises to the cell membrane. Its subcellular location is the cytoplasm. The catalysed reaction is ATP + H2O + cellular proteinSide 1 = ADP + phosphate + cellular proteinSide 2.. Part of the Sec protein translocase complex. Interacts with the SecYEG preprotein conducting channel. Has a central role in coupling the hydrolysis of ATP to the transfer of proteins into and across the cell membrane, serving as an ATP-driven molecular motor driving the stepwise translocation of polypeptide chains across the membrane. This is Protein translocase subunit SecA 2 from Listeria monocytogenes serotype 4b (strain F2365).